The chain runs to 133 residues: Small ribosomal subunit protein uS8 (133 aa).

This sequence belongs to the universal ribosomal protein uS8 family. Part of the 30S ribosomal subunit. Contacts proteins S5 and S12.

One of the primary rRNA binding proteins, it binds directly to 16S rRNA central domain where it helps coordinate assembly of the platform of the 30S subunit. The polypeptide is Small ribosomal subunit protein uS8 (Microcystis aeruginosa (strain NIES-843 / IAM M-2473)).